A 187-amino-acid chain; its full sequence is Adenylate kinase (187 aa).

10–15 (GSGKGT) is an ATP binding site. The tract at residues 30–59 (STGDLLRSEVVAGTPLGLQAKQVMAQGDLV) is NMP. AMP is bound by residues Thr-31, Arg-36, 57-59 (DLV), 85-88 (GYPR), and Gln-92. An LID region spans residues 126 to 136 (GRAQAEGREDD). Arg-127 is an ATP binding site. 2 residues coordinate AMP: Arg-133 and Arg-144. Gly-172 contacts ATP.

The protein belongs to the adenylate kinase family. As to quaternary structure, monomer.

The protein resides in the cytoplasm. It carries out the reaction AMP + ATP = 2 ADP. Its pathway is purine metabolism; AMP biosynthesis via salvage pathway; AMP from ADP: step 1/1. Catalyzes the reversible transfer of the terminal phosphate group between ATP and AMP. Plays an important role in cellular energy homeostasis and in adenine nucleotide metabolism. This Xylella fastidiosa (strain M12) protein is Adenylate kinase.